Consider the following 511-residue polypeptide: Maturase K (511 aa).

It belongs to the intron maturase 2 family. MatK subfamily.

It localises to the plastid. Its subcellular location is the chloroplast. Its function is as follows. Usually encoded in the trnK tRNA gene intron. Probably assists in splicing its own and other chloroplast group II introns. In Hordeum vulgare subsp. spontaneum (Wild barley), this protein is Maturase K.